Reading from the N-terminus, the 508-residue chain is Steroid 17-alpha-hydroxylase/17,20 lyase (508 aa).

N202 contacts substrate. C442 is a heme binding site.

The protein belongs to the cytochrome P450 family. Requires heme as cofactor.

The protein resides in the endoplasmic reticulum membrane. It localises to the microsome membrane. The catalysed reaction is a C21-steroid + reduced [NADPH--hemoprotein reductase] + O2 = a 17alpha-hydroxy-C21-steroid + oxidized [NADPH--hemoprotein reductase] + H2O + H(+). It catalyses the reaction progesterone + reduced [NADPH--hemoprotein reductase] + O2 = 17alpha-hydroxyprogesterone + oxidized [NADPH--hemoprotein reductase] + H2O + H(+). It carries out the reaction pregnenolone + reduced [NADPH--hemoprotein reductase] + O2 = 17alpha-hydroxypregnenolone + oxidized [NADPH--hemoprotein reductase] + H2O + H(+). The enzyme catalyses 17alpha-hydroxyprogesterone + reduced [NADPH--hemoprotein reductase] + O2 = androst-4-ene-3,17-dione + acetate + oxidized [NADPH--hemoprotein reductase] + H2O + 2 H(+). The catalysed reaction is 17alpha-hydroxyprogesterone + reduced [NADPH--hemoprotein reductase] + O2 = 16alpha,17alpha-dihydroxyprogesterone + oxidized [NADPH--hemoprotein reductase] + H2O + H(+). It catalyses the reaction 16alpha,17alpha-dihydroxyprogesterone + reduced [NADPH--hemoprotein reductase] + O2 = 6beta,16alpha,17alpha-trihydroxyprogesterone + oxidized [NADPH--hemoprotein reductase] + H2O + H(+). It carries out the reaction 17alpha-hydroxypregnenolone + reduced [NADPH--hemoprotein reductase] + O2 = 3beta-hydroxyandrost-5-en-17-one + acetate + oxidized [NADPH--hemoprotein reductase] + H2O + 2 H(+). The enzyme catalyses 16alpha,17alpha-dihydroxypregnenolone + reduced [NADPH--hemoprotein reductase] + O2 = 3beta,16alpha-dihydroxy-androst-5-en-17-one + acetate + oxidized [NADPH--hemoprotein reductase] + H2O + 2 H(+). The catalysed reaction is 3beta-hydroxyandrost-5-en-17-one + reduced [NADPH--hemoprotein reductase] + O2 = 3beta,16alpha-dihydroxy-androst-5-en-17-one + oxidized [NADPH--hemoprotein reductase] + H2O + H(+). It catalyses the reaction androst-4-ene-3,17-dione + reduced [NADPH--hemoprotein reductase] + O2 = 16alpha-hydroxyandrost-4-ene-3,17-dione + oxidized [NADPH--hemoprotein reductase] + H2O + H(+). It participates in steroid hormone biosynthesis. It functions in the pathway steroid biosynthesis; glucocorticoid biosynthesis. With respect to regulation, regulated predominantly by intracellular cAMP levels. The 17,20-lyase activity is stimulated by cytochrome b5, which acts as an allosteric effector increasing the Vmax of the lyase activity. In terms of biological role, a cytochrome P450 monooxygenase involved in corticoid and androgen biosynthesis. Catalyzes 17-alpha hydroxylation of C21 steroids, which is common for both pathways. A second oxidative step, required only for androgen synthesis, involves an acyl-carbon cleavage. The 17-alpha hydroxy intermediates, as part of adrenal glucocorticoids biosynthesis pathway, are precursors of cortisol. Hydroxylates steroid hormones, pregnenolone and progesterone to form 17-alpha hydroxy metabolites, followed by the cleavage of the C17-C20 bond to form C19 steroids, dehydroepiandrosterone (DHEA) and androstenedione. Has 16-alpha hydroxylase activity. Catalyzes 16-alpha hydroxylation of 17-alpha hydroxy pregnenolone, followed by the cleavage of the C17-C20 bond to form 16-alpha-hydroxy DHEA. Also 16-alpha hydroxylates androgens, relevant for estriol synthesis. Mechanistically, uses molecular oxygen inserting one oxygen atom into a substrate, and reducing the second into a water molecule, with two electrons provided by NADPH via cytochrome P450 reductase (CPR; NADPH-ferrihemoprotein reductase). The polypeptide is Steroid 17-alpha-hydroxylase/17,20 lyase (CYP17A1) (Pan troglodytes (Chimpanzee)).